Here is a 101-residue protein sequence, read N- to C-terminus: Urease subunit beta (101 aa).

This sequence belongs to the urease beta subunit family. As to quaternary structure, heterotrimer of UreA (gamma), UreB (beta) and UreC (alpha) subunits. Three heterotrimers associate to form the active enzyme.

The protein resides in the cytoplasm. The catalysed reaction is urea + 2 H2O + H(+) = hydrogencarbonate + 2 NH4(+). It participates in nitrogen metabolism; urea degradation; CO(2) and NH(3) from urea (urease route): step 1/1. This Burkholderia pseudomallei (strain 668) protein is Urease subunit beta.